Reading from the N-terminus, the 410-residue chain is Imidazolonepropionase (410 aa).

His73 and His75 together coordinate Fe(3+). Zn(2+) is bound by residues His73 and His75. 4-imidazolone-5-propanoate is bound by residues Arg82, Tyr145, and His178. Tyr145 serves as a coordination point for N-formimidoyl-L-glutamate. Position 243 (His243) interacts with Fe(3+). Residue His243 coordinates Zn(2+). Gln246 contacts 4-imidazolone-5-propanoate. Asp318 provides a ligand contact to Fe(3+). Asp318 serves as a coordination point for Zn(2+). 2 residues coordinate N-formimidoyl-L-glutamate: Asn320 and Gly322. Ser323 is a binding site for 4-imidazolone-5-propanoate.

This sequence belongs to the metallo-dependent hydrolases superfamily. HutI family. The cofactor is Zn(2+). It depends on Fe(3+) as a cofactor.

It localises to the cytoplasm. It carries out the reaction 4-imidazolone-5-propanoate + H2O = N-formimidoyl-L-glutamate. The protein operates within amino-acid degradation; L-histidine degradation into L-glutamate; N-formimidoyl-L-glutamate from L-histidine: step 3/3. In terms of biological role, catalyzes the hydrolytic cleavage of the carbon-nitrogen bond in imidazolone-5-propanoate to yield N-formimidoyl-L-glutamate. It is the third step in the universal histidine degradation pathway. The protein is Imidazolonepropionase of Shewanella frigidimarina (strain NCIMB 400).